The primary structure comprises 269 residues: MNGSNPIIEFKDVSFQYQSDAAFTLNRVSFSIPAGQWTSIVGHNGSGKSTIAKLMVGIEEPSEGQILFQNLPVDSQNKREVRKHIGIVFQNPDNQFVGSIVKFDVAFGLENQLVPYKEMVSKVNQVLTEVDMINKADDEPHSLSGGQKQRVAIAGVLALNPDVLILDEATTMLDPHGKSSLLNLVNEVKVNNHVTIISITHDLDEAMHADQIIVLNKGTVFKQGTPQDIFKCEEALISVGLDLPFPLKMNRLLGFDSTYVTYEGLIKKL.

The 235-residue stretch at 8-242 folds into the ABC transporter domain; that stretch reads IEFKDVSFQY…EEALISVGLD (235 aa). ATP is bound at residue 42 to 49; it reads GHNGSGKS.

The protein belongs to the ABC transporter superfamily. Energy-coupling factor EcfA family. In terms of assembly, forms a stable energy-coupling factor (ECF) transporter complex composed of 2 membrane-embedded substrate-binding proteins (S component), 2 ATP-binding proteins (A component) and 2 transmembrane proteins (T component).

Its subcellular location is the cell membrane. ATP-binding (A) component of a common energy-coupling factor (ECF) ABC-transporter complex. Unlike classic ABC transporters this ECF transporter provides the energy necessary to transport a number of different substrates. The chain is Energy-coupling factor transporter ATP-binding protein EcfA1 from Staphylococcus epidermidis (strain ATCC 35984 / DSM 28319 / BCRC 17069 / CCUG 31568 / BM 3577 / RP62A).